Reading from the N-terminus, the 223-residue chain is Neurotrophic factor BDNF precursor form (223 aa).

The first 5 residues, 1–5, serve as a signal peptide directing secretion; sequence SCMKA. Positions 6 to 114 are excised as a propeptide; that stretch reads APMKEVSIRG…AANMSMRVRR (109 aa). An N-linked (GlcNAc...) asparagine glycan is attached at N107. 2 cysteine pairs are disulfide-bonded: C127–C194 and C172–C223.

This sequence belongs to the NGF-beta family.

It localises to the secreted. Promotes the survival of neuronal populations that are all located either in the central nervous system or directly connected to it. The sequence is that of Neurotrophic factor BDNF precursor form (BDNF) from Candoia carinata (Papuan tree boa).